A 134-amino-acid polypeptide reads, in one-letter code: Mini-ribonuclease 3 (134 aa).

Residue Asp23 is part of the active site.

Belongs to the MrnC RNase family. In terms of assembly, homodimer. The cofactor is Mg(2+).

It is found in the cytoplasm. Functionally, involved in correct processing of both the 5' and 3' ends of 23S rRNA precursor. Processes 30S rRNA precursor transcript even in absence of ribonuclease 3 (Rnc); Rnc processes 30S rRNA into smaller rRNA precursors. The chain is Mini-ribonuclease 3 from Brevibacillus brevis (strain 47 / JCM 6285 / NBRC 100599).